We begin with the raw amino-acid sequence, 134 residues long: B3 domain-containing protein At1g16640 (134 aa).

A DNA-binding region (TF-B3) is located at residues 7-100 (VQFMKPFISE…TFYVIIYGHN (94 aa)).

It is found in the nucleus. The protein is B3 domain-containing protein At1g16640 of Arabidopsis thaliana (Mouse-ear cress).